Here is a 294-residue protein sequence, read N- to C-terminus: 33 kDa chaperonin (294 aa).

Intrachain disulfides connect Cys239-Cys241 and Cys272-Cys275.

Belongs to the HSP33 family. Post-translationally, under oxidizing conditions two disulfide bonds are formed involving the reactive cysteines. Under reducing conditions zinc is bound to the reactive cysteines and the protein is inactive.

It localises to the cytoplasm. Its function is as follows. Redox regulated molecular chaperone. Protects both thermally unfolding and oxidatively damaged proteins from irreversible aggregation. Plays an important role in the bacterial defense system toward oxidative stress. The polypeptide is 33 kDa chaperonin (Listeria innocua serovar 6a (strain ATCC BAA-680 / CLIP 11262)).